A 228-amino-acid chain; its full sequence is uncharacterized protein (228 aa).

Residues 7–228 (VEVHHLKKSV…LVNGQLQEEA (222 aa)) enclose the ABC transporter domain. Position 43 to 50 (43 to 50 (GESGSGKS)) interacts with ATP.

It belongs to the ABC transporter superfamily.

This is an uncharacterized protein from Escherichia coli O157:H7.